The sequence spans 183 residues: Phosphopantetheine adenylyltransferase (183 aa).

Serine 8 contributes to the substrate binding site. ATP contacts are provided by residues 8–9 and histidine 16; that span reads SF. The substrate site is built by lysine 40, threonine 72, and arginine 86. ATP-binding positions include 87-89, glutamate 97, and 122-128; these read GLR and YSFLSSS.

The protein belongs to the bacterial CoaD family. As to quaternary structure, homohexamer. It depends on Mg(2+) as a cofactor.

It localises to the cytoplasm. It carries out the reaction (R)-4'-phosphopantetheine + ATP + H(+) = 3'-dephospho-CoA + diphosphate. Its pathway is cofactor biosynthesis; coenzyme A biosynthesis; CoA from (R)-pantothenate: step 4/5. Its function is as follows. Reversibly transfers an adenylyl group from ATP to 4'-phosphopantetheine, yielding dephospho-CoA (dPCoA) and pyrophosphate. In Nostoc punctiforme (strain ATCC 29133 / PCC 73102), this protein is Phosphopantetheine adenylyltransferase.